The primary structure comprises 424 residues: Enolase (424 aa).

Position 163 (Gln-163) interacts with (2R)-2-phosphoglycerate. Glu-205 acts as the Proton donor in catalysis. 3 residues coordinate Mg(2+): Asp-242, Glu-285, and Asp-312. 4 residues coordinate (2R)-2-phosphoglycerate: Lys-337, Arg-366, Ser-367, and Lys-388. The active-site Proton acceptor is the Lys-337.

It belongs to the enolase family. Mg(2+) is required as a cofactor.

It is found in the cytoplasm. Its subcellular location is the secreted. The protein localises to the cell surface. The catalysed reaction is (2R)-2-phosphoglycerate = phosphoenolpyruvate + H2O. It participates in carbohydrate degradation; glycolysis; pyruvate from D-glyceraldehyde 3-phosphate: step 4/5. Its function is as follows. Catalyzes the reversible conversion of 2-phosphoglycerate (2-PG) into phosphoenolpyruvate (PEP). It is essential for the degradation of carbohydrates via glycolysis. The polypeptide is Enolase (Sphingopyxis alaskensis (strain DSM 13593 / LMG 18877 / RB2256) (Sphingomonas alaskensis)).